We begin with the raw amino-acid sequence, 266 residues long: Proteasome subunit beta type-7 (266 aa).

The propeptide at 1–34 is removed in mature form; that stretch reads MENLNRGGFDFDLCNRNNVLEKTGLRMKGFMKTG. T35 acts as the Nucleophile in catalysis.

It belongs to the peptidase T1B family. The 26S proteasome consists of a 20S proteasome core and two 19S regulatory subunits. The 20S proteasome core is composed of 28 subunits that are arranged in four stacked rings, resulting in a barrel-shaped structure. The two end rings are each formed by seven alpha subunits, and the two central rings are each formed by seven beta subunits. The catalytic chamber with the active sites is on the inside of the barrel.

The protein localises to the cytoplasm. It is found in the nucleus. It carries out the reaction Cleavage of peptide bonds with very broad specificity.. The proteasome is a multicatalytic proteinase complex which is characterized by its ability to cleave peptides with Arg, Phe, Tyr, Leu, and Glu adjacent to the leaving group at neutral or slightly basic pH. The proteasome has an ATP-dependent proteolytic activity. This Dictyostelium discoideum (Social amoeba) protein is Proteasome subunit beta type-7 (psmB7).